The sequence spans 351 residues: Probable dual-specificity RNA methyltransferase RlmN (351 aa).

Catalysis depends on Glu98, which acts as the Proton acceptor. The region spanning 104–332 (TQKRLTVCVS…ASIRRSRGLD (229 aa)) is the Radical SAM core domain. The cysteines at positions 111 and 337 are disulfide-linked. [4Fe-4S] cluster is bound by residues Cys118, Cys122, and Cys125. S-adenosyl-L-methionine-binding positions include 165 to 166 (GE), Ser195, 218 to 220 (SLH), and Asn294. Catalysis depends on Cys337, which acts as the S-methylcysteine intermediate.

Belongs to the radical SAM superfamily. RlmN family. It depends on [4Fe-4S] cluster as a cofactor.

The protein resides in the cytoplasm. It carries out the reaction adenosine(2503) in 23S rRNA + 2 reduced [2Fe-2S]-[ferredoxin] + 2 S-adenosyl-L-methionine = 2-methyladenosine(2503) in 23S rRNA + 5'-deoxyadenosine + L-methionine + 2 oxidized [2Fe-2S]-[ferredoxin] + S-adenosyl-L-homocysteine. The enzyme catalyses adenosine(37) in tRNA + 2 reduced [2Fe-2S]-[ferredoxin] + 2 S-adenosyl-L-methionine = 2-methyladenosine(37) in tRNA + 5'-deoxyadenosine + L-methionine + 2 oxidized [2Fe-2S]-[ferredoxin] + S-adenosyl-L-homocysteine. Its function is as follows. Specifically methylates position 2 of adenine 2503 in 23S rRNA and position 2 of adenine 37 in tRNAs. This Acaryochloris marina (strain MBIC 11017) protein is Probable dual-specificity RNA methyltransferase RlmN.